The primary structure comprises 677 residues: Methionine--tRNA ligase (677 aa).

The 'HIGH' region motif lies at 15–25 (PYANGSIHLGH). Residues C146, C149, C159, and C162 each contribute to the Zn(2+) site. The 'KMSKS' region signature appears at 333–337 (KMSKS). ATP is bound at residue K336. Positions 575–677 (DFAKVDLRVA…AGAKPGHQVK (103 aa)) constitute a tRNA-binding domain.

It belongs to the class-I aminoacyl-tRNA synthetase family. MetG type 1 subfamily. In terms of assembly, homodimer. It depends on Zn(2+) as a cofactor.

It localises to the cytoplasm. The enzyme catalyses tRNA(Met) + L-methionine + ATP = L-methionyl-tRNA(Met) + AMP + diphosphate. Functionally, is required not only for elongation of protein synthesis but also for the initiation of all mRNA translation through initiator tRNA(fMet) aminoacylation. The polypeptide is Methionine--tRNA ligase (Escherichia fergusonii (strain ATCC 35469 / DSM 13698 / CCUG 18766 / IAM 14443 / JCM 21226 / LMG 7866 / NBRC 102419 / NCTC 12128 / CDC 0568-73)).